The following is a 257-amino-acid chain: NAD-capped RNA hydrolase NudC (257 aa).

Substrate is bound by residues Lys25 and Arg69. Cys98 and Cys101 together coordinate Zn(2+). A substrate-binding site is contributed by Glu111. Zn(2+) contacts are provided by Cys116 and Cys119. Tyr124 serves as a coordination point for substrate. In terms of domain architecture, Nudix hydrolase spans 125 to 248; that stretch reads PQIAPCIIVA…TVARRLIEDT (124 aa). 3 residues coordinate a divalent metal cation: Ala158, Glu174, and Glu178. Residues 159-180 carry the Nudix box motif; the sequence is GFVEVGETLEQAVAREVMEESG. Residue 192–199 participates in substrate binding; sequence QPWPFPQS. Glu219 lines the a divalent metal cation pocket. Ala241 is a binding site for substrate.

The protein belongs to the Nudix hydrolase family. NudC subfamily. As to quaternary structure, homodimer. The cofactor is Mg(2+). Mn(2+) is required as a cofactor. Zn(2+) serves as cofactor.

The catalysed reaction is a 5'-end NAD(+)-phospho-ribonucleoside in mRNA + H2O = a 5'-end phospho-adenosine-phospho-ribonucleoside in mRNA + beta-nicotinamide D-ribonucleotide + 2 H(+). The enzyme catalyses NAD(+) + H2O = beta-nicotinamide D-ribonucleotide + AMP + 2 H(+). It carries out the reaction NADH + H2O = reduced beta-nicotinamide D-ribonucleotide + AMP + 2 H(+). In terms of biological role, mRNA decapping enzyme that specifically removes the nicotinamide adenine dinucleotide (NAD) cap from a subset of mRNAs by hydrolyzing the diphosphate linkage to produce nicotinamide mononucleotide (NMN) and 5' monophosphate mRNA. The NAD-cap is present at the 5'-end of some mRNAs and stabilizes RNA against 5'-processing. Has preference for mRNAs with a 5'-end purine. Catalyzes the hydrolysis of a broad range of dinucleotide pyrophosphates. This Shigella flexneri protein is NAD-capped RNA hydrolase NudC.